A 222-amino-acid chain; its full sequence is Pyrrolidone-carboxylate peptidase (222 aa).

Residues Glu80, Cys146, and His170 contribute to the active site.

The protein belongs to the peptidase C15 family. In terms of assembly, homotetramer.

The protein localises to the cytoplasm. It catalyses the reaction Release of an N-terminal pyroglutamyl group from a polypeptide, the second amino acid generally not being Pro.. Its function is as follows. Removes 5-oxoproline from various penultimate amino acid residues except L-proline. The chain is Pyrrolidone-carboxylate peptidase from Mycobacterium marinum (strain ATCC BAA-535 / M).